Here is a 192-residue protein sequence, read N- to C-terminus: Ubiquitin-conjugating enzyme E2 T (192 aa).

The UBC core domain maps to 2 to 152 (QRVSRLKREL…AKKWTEKHAL (151 aa)). Cysteine 86 serves as the catalytic Glycyl thioester intermediate. Residues 150-192 (HALPAPQGSDKESQEKSGSSEGTSHKRKSAEIAEESKKPCREP) are disordered. Basic and acidic residues predominate over residues 178–192 (SAEIAEESKKPCREP).

The protein belongs to the ubiquitin-conjugating enzyme family.

The protein localises to the nucleus. The catalysed reaction is S-ubiquitinyl-[E1 ubiquitin-activating enzyme]-L-cysteine + [E2 ubiquitin-conjugating enzyme]-L-cysteine = [E1 ubiquitin-activating enzyme]-L-cysteine + S-ubiquitinyl-[E2 ubiquitin-conjugating enzyme]-L-cysteine.. Its pathway is protein modification; protein ubiquitination. Its function is as follows. Accepts ubiquitin from the E1 complex and catalyzes its covalent attachment to other proteins. Catalyzes monoubiquitination. Involved in DNA repair. This Xenopus laevis (African clawed frog) protein is Ubiquitin-conjugating enzyme E2 T (ube2t).